Reading from the N-terminus, the 966-residue chain is Receptor protein-tyrosine kinase CEPR1 (966 aa).

Positions 1 to 22 (MRLKNFPFFVLFFFFCFNSNQS) are cleaved as a signal peptide. Over 23–592 (WGLMSSNQQP…QEPHGKKKLS (570 aa)) the chain is Extracellular. N-linked (GlcNAc...) asparagine glycosylation occurs at asparagine 61. LRR repeat units follow at residues 70–94 (QGLV…VCSY), 95–120 (FPNL…TIPN), 122–144 (SLLR…FSQM), 145–168 (KSLR…IFNL), 170–194 (DLEY…VSKL), 195–218 (TKLT…IGNL), 219–242 (TSLV…IGNL), 245–267 (LRQL…IGNL), 268–291 (KNLT…ICSL), 292–315 (PNLR…LGNS), 317–339 (TLKI…LGSS), 341–363 (PMIA…VCKS), 365–386 (KLLY…TYGS), 387–411 (CKTL…VMSL), 412–435 (PHVS…IGNA), 437–459 (NLSE…LSHS), 460–483 (TNLV…VGRL), 484–507 (RKLN…LSNL), 508–531 (KSLN…LSEL), and 533–554 (PTSI…LIRG). Asparagine 109, asparagine 120, asparagine 128, and asparagine 167 each carry an N-linked (GlcNAc...) asparagine glycan. 2 N-linked (GlcNAc...) asparagine glycosylation sites follow: asparagine 217 and asparagine 241. 2 N-linked (GlcNAc...) asparagine glycosylation sites follow: asparagine 269 and asparagine 301. Asparagine 437 carries N-linked (GlcNAc...) asparagine glycosylation. N-linked (GlcNAc...) asparagine glycans are attached at residues asparagine 527 and asparagine 537. The helical transmembrane segment at 593 to 613 (SIWAILVSVFILVLGVIMFYL) threads the bilayer. Over 614–966 (RQRMSKNRAV…VSDHLTQTRL (353 aa)) the chain is Cytoplasmic. A Protein kinase domain is found at 656–934 (LVDKNIVGHG…TMNEVVQLLI (279 aa)). Residues 662 to 670 (VGHGGSGTV) and lysine 684 contribute to the ATP site. 2 positions are modified to phosphotyrosine: tyrosine 738 and tyrosine 775. Aspartate 788 acts as the Proton acceptor in catalysis. Residues tyrosine 831 and tyrosine 838 each carry the phosphotyrosine modification. Residues 937–966 (TPQGGPDMTSKPTTKIKDSIVSDHLTQTRL) are disordered.

It belongs to the protein kinase superfamily. Ser/Thr protein kinase family. In terms of assembly, interacts with the root-derived peptides CEP1, CEP3 and CEP5. In terms of tissue distribution, expressed in the vasculature, especially in phloem and procambium regions, of stems, leaves, cotyledons, sepals, pedals, pedicels, hypocotyls and roots (in primary and lateral roots, but not in root tips). Expressed in the root from the basal meristem onward. Present in the phloem pole pericycle and in the adjacent phloem.

The protein resides in the cell membrane. The catalysed reaction is L-tyrosyl-[protein] + ATP = O-phospho-L-tyrosyl-[protein] + ADP + H(+). Functionally, receptor kinase involved in the perception of C-terminally encoded plant signaling peptide (CEP) and subsequent regulation of root and shoot development. Required for xylem and phloem cell files morphology and organization, probably by preventing ectopic lignification in phloem cells. Together with CEPR2, mediates systemic nitrogen (N)-demand signaling upon the perception of root-derived peptides (e.g. CEP1) via the up-regulation of genes involved in N uptake and assimilation pathways. Positively regulates lateral root initiation and development; probably repressed by the signaling peptide CEP5. The chain is Receptor protein-tyrosine kinase CEPR1 from Arabidopsis thaliana (Mouse-ear cress).